The chain runs to 302 residues: Nucleotide-binding protein BceJ2315_08000 (302 aa).

Gly-8–Ser-15 is a binding site for ATP. Residue Asp-57–Ser-60 participates in GTP binding.

Belongs to the RapZ-like family.

In terms of biological role, displays ATPase and GTPase activities. In Burkholderia cenocepacia (strain ATCC BAA-245 / DSM 16553 / LMG 16656 / NCTC 13227 / J2315 / CF5610) (Burkholderia cepacia (strain J2315)), this protein is Nucleotide-binding protein BceJ2315_08000.